The sequence spans 346 residues: fMet-Leu-Phe receptor (346 aa).

Residues Asn1 and Asn7 are each glycosylated (N-linked (GlcNAc...) asparagine). The Extracellular portion of the chain corresponds to 1–24 (NSSLPTNISGGTPAVSAGYLFLDI). The chain crosses the membrane as a helical span at residues 25-47 (ITYLVFAVTFVLGVLGNGLVIWV). The Cytoplasmic portion of the chain corresponds to 48-58 (AGFRMTHTVTT). The chain crosses the membrane as a helical span at residues 59–80 (ISYLNLAVADFCFTSTLPFFMV). Topologically, residues 81 to 97 (RKAMGGHWPFGWFLCKF) are extracellular. An intrachain disulfide couples Cys95 to Cys173. Residues 98 to 118 (IFTIVDINLFGSVFLIALIAL) traverse the membrane as a helical segment. Residues 119–137 (DRCVCVLHPVWTQNHRTVS) lie on the Cytoplasmic side of the membrane. The helical transmembrane segment at 138-159 (LAKKVIIGPWVMALLLTLPVII) threads the bilayer. Over 160-202 (RVTTVPGKTGTVACTFNFSPWTNDPKERINVAIAMLTVRGIIR) the chain is Extracellular. Residues 203 to 223 (FIIGFSAPMSIVAVSYGLIAT) traverse the membrane as a helical segment. The Cytoplasmic segment spans residues 224-239 (KIHKQGLIKFSRPLRV). Residues 240–263 (LSFVAAAFFLCWSPYQVVALIATV) form a helical membrane-spanning segment. Residues 264 to 282 (RIRELLQGMYKEIGIAVDV) are Extracellular-facing. The helical transmembrane segment at 283–302 (TSALAFFNSCLNPMLYVFMG) threads the bilayer. The Cytoplasmic segment spans residues 303–346 (QDFRERLIHALPASLERALTEDSTQTSDTATNSTLPSAEVALQA). The disordered stretch occupies residues 322-346 (TEDSTQTSDTATNSTLPSAEVALQA). Over residues 323–338 (EDSTQTSDTATNSTLP) the composition is skewed to polar residues.

The protein belongs to the G-protein coupled receptor 1 family. In terms of processing, phosphorylated; which is necessary for desensitization.

It is found in the cell membrane. High affinity receptor for N-formyl-methionyl peptides (fMLP), which are powerful neutrophil chemotactic factors. Binding of fMLP to the receptor stimulates intracellular calcium mobilization and superoxide anion release. This response is mediated via a G-protein that activates a phosphatidylinositol-calcium second messenger system. Receptor for TAFA4, mediates its effects on chemoattracting macrophages, promoting phagocytosis and increasing ROS release. Receptor for cathepsin CTSG, leading to increased phagocyte chemotaxis. This chain is fMet-Leu-Phe receptor (FPR1), found in Pan troglodytes (Chimpanzee).